The following is a 148-amino-acid chain: Hemoglobin subunit beta-A (148 aa).

In terms of domain architecture, Globin spans 3–148; sequence DWTDAERAAI…VVSALGRQYH (146 aa). Heme b contacts are provided by His64 and His93.

Belongs to the globin family. As to quaternary structure, heterotetramer of two alpha chains and two beta chains. In terms of tissue distribution, red blood cells.

Its function is as follows. Involved in oxygen transport from gills to the various peripheral tissues. This chain is Hemoglobin subunit beta-A (hbb1), found in Seriola quinqueradiata (Five-ray yellowtail).